A 485-amino-acid chain; its full sequence is Glutamyl-tRNA(Gln) amidotransferase subunit A (485 aa).

Residues K82 and S157 each act as charge relay system in the active site. The active-site Acyl-ester intermediate is the S181.

It belongs to the amidase family. GatA subfamily. In terms of assembly, heterotrimer of A, B and C subunits.

The enzyme catalyses L-glutamyl-tRNA(Gln) + L-glutamine + ATP + H2O = L-glutaminyl-tRNA(Gln) + L-glutamate + ADP + phosphate + H(+). Its function is as follows. Allows the formation of correctly charged Gln-tRNA(Gln) through the transamidation of misacylated Glu-tRNA(Gln) in organisms which lack glutaminyl-tRNA synthetase. The reaction takes place in the presence of glutamine and ATP through an activated gamma-phospho-Glu-tRNA(Gln). This is Glutamyl-tRNA(Gln) amidotransferase subunit A from Treponema denticola (strain ATCC 35405 / DSM 14222 / CIP 103919 / JCM 8153 / KCTC 15104).